The chain runs to 186 residues: Ribosome-recycling factor (186 aa).

This sequence belongs to the RRF family.

It is found in the cytoplasm. Responsible for the release of ribosomes from messenger RNA at the termination of protein biosynthesis. May increase the efficiency of translation by recycling ribosomes from one round of translation to another. The protein is Ribosome-recycling factor of Acidovorax ebreus (strain TPSY) (Diaphorobacter sp. (strain TPSY)).